Reading from the N-terminus, the 177-residue chain is Bifunctional protein PyrR (177 aa).

The PRPP-binding motif lies at Val-99–Thr-111.

Belongs to the purine/pyrimidine phosphoribosyltransferase family. PyrR subfamily.

The catalysed reaction is UMP + diphosphate = 5-phospho-alpha-D-ribose 1-diphosphate + uracil. Its function is as follows. Regulates the transcription of the pyrimidine nucleotide (pyr) operon in response to exogenous pyrimidines. Functionally, also displays a weak uracil phosphoribosyltransferase activity which is not physiologically significant. The sequence is that of Bifunctional protein PyrR from Citrifermentans bemidjiense (strain ATCC BAA-1014 / DSM 16622 / JCM 12645 / Bem) (Geobacter bemidjiensis).